Here is a 921-residue protein sequence, read N- to C-terminus: Isoleucine--tRNA ligase (921 aa).

The 'HIGH' region motif lies at 57-67 (PYANGDIHMGH). Glutamate 552 is a binding site for L-isoleucyl-5'-AMP. The 'KMSKS' region motif lies at 593-597 (KMSKS). Lysine 596 contacts ATP. The Zn(2+) site is built by cysteine 888, cysteine 891, cysteine 908, and cysteine 911.

It belongs to the class-I aminoacyl-tRNA synthetase family. IleS type 1 subfamily. Monomer. It depends on Zn(2+) as a cofactor.

The protein resides in the cytoplasm. It carries out the reaction tRNA(Ile) + L-isoleucine + ATP = L-isoleucyl-tRNA(Ile) + AMP + diphosphate. Catalyzes the attachment of isoleucine to tRNA(Ile). As IleRS can inadvertently accommodate and process structurally similar amino acids such as valine, to avoid such errors it has two additional distinct tRNA(Ile)-dependent editing activities. One activity is designated as 'pretransfer' editing and involves the hydrolysis of activated Val-AMP. The other activity is designated 'posttransfer' editing and involves deacylation of mischarged Val-tRNA(Ile). The sequence is that of Isoleucine--tRNA ligase from Bacillus cereus (strain G9842).